We begin with the raw amino-acid sequence, 616 residues long: Chaperone protein HscA (616 aa).

Belongs to the heat shock protein 70 family.

Functionally, chaperone involved in the maturation of iron-sulfur cluster-containing proteins. Has a low intrinsic ATPase activity which is markedly stimulated by HscB. Involved in the maturation of IscU. The chain is Chaperone protein HscA from Klebsiella pneumoniae (strain 342).